Here is a 541-residue protein sequence, read N- to C-terminus: T-complex protein 1 subunit epsilon (541 aa).

At alanine 2 the chain carries N-acetylalanine. Lysine 20 is covalently cross-linked (Glycyl lysine isopeptide (Lys-Gly) (interchain with G-Cter in SUMO2)). Serine 26 is subject to Phosphoserine. Glycine 53 is a binding site for ADP. Position 53 (glycine 53) interacts with ATP. Residue aspartate 104 coordinates Mg(2+). Residues glycine 105, threonine 106, threonine 107, and serine 175 each coordinate ADP. ATP-binding residues include threonine 106 and threonine 107. Residues lysine 210, lysine 214, lysine 265, lysine 275, and lysine 279 each participate in a glycyl lysine isopeptide (Lys-Gly) (interchain with G-Cter in SUMO2) cross-link. Phosphoserine is present on serine 346. Residue lysine 392 forms a Glycyl lysine isopeptide (Lys-Gly) (interchain with G-Cter in SUMO2) linkage. Glycine 422, aspartate 492, glutamate 508, and lysine 513 together coordinate ADP. An ATP-binding site is contributed by glycine 422. Serine 539 carries the post-translational modification Phosphoserine.

It belongs to the TCP-1 chaperonin family. As to quaternary structure, component of the chaperonin-containing T-complex (TRiC), a hexadecamer composed of two identical back-to-back stacked rings enclosing a protein folding chamber. Each ring is made up of eight different subunits: TCP1/CCT1, CCT2, CCT3, CCT4, CCT5, CCT6A/CCT6, CCT7, CCT8. Interacts with PACRG. Interacts with DNAAF4. Interacts with DLEC1. Interacts with SPMAP2. Post-translationally, ubiquitinated by the DCX(DCAF12) complex specifically recognizes the diglutamate (Glu-Glu) at the C-terminus, leading to its degradation.

The protein resides in the cytoplasm. The protein localises to the cytoskeleton. It localises to the microtubule organizing center. It is found in the centrosome. The catalysed reaction is ATP + H2O = ADP + phosphate + H(+). In terms of biological role, component of the chaperonin-containing T-complex (TRiC), a molecular chaperone complex that assists the folding of actin, tubulin and other proteins upon ATP hydrolysis. The TRiC complex mediates the folding of WRAP53/TCAB1, thereby regulating telomere maintenance. As part of the TRiC complex may play a role in the assembly of BBSome, a complex involved in ciliogenesis regulating transports vesicles to the cilia. The sequence is that of T-complex protein 1 subunit epsilon (CCT5) from Homo sapiens (Human).